Consider the following 56-residue polypeptide: U-limacoditoxin(3)-Dv21 (56 aa).

The signal sequence occupies residues 1 to 19 (MKKVIMLLLIFALFAYALS). 3 cysteine pairs are disulfide-bonded: Cys-26-Cys-41, Cys-33-Cys-46, and Cys-40-Cys-53.

The protein belongs to the limacoditoxin-22 family. Expressed by the venom secretory cell of the spine. The spine is a cuticular structure containing a single large nucleated venom-secreting cell at its base. It is an independent unit capable of producing, storing and injecting venom. On the back of D.vulnerans caterpillars, spines are grouped together by 50 to 100 to form scoli, of which there are eight in D.vulnerans.

It is found in the secreted. Its function is as follows. Probable toxin. Shows a moderate antiparasitic activity against the major pathogenic nematode of ruminants (H.contortus, IC(50)=22.1 uM). Does not show insecticidal activities. Does not induce increase in intracellular calcium in mouse DRG neurons, suggesting that it does not induce pain. This Doratifera vulnerans (Mottled cup moth) protein is U-limacoditoxin(3)-Dv21.